The primary structure comprises 539 residues: GMP synthase [glutamine-hydrolyzing] (539 aa).

A Glutamine amidotransferase type-1 domain is found at 4–202 (KILILDFGSQ…VLQIAGCKPD (199 aa)). Catalysis depends on Cys81, which acts as the Nucleophile. Catalysis depends on residues His176 and Glu178. The GMPS ATP-PPase domain occupies 203–395 (WVMRDHIEEA…LGLPPEMVYR (193 aa)). 230–236 (SGGVDSS) lines the ATP pocket.

Homodimer.

The enzyme catalyses XMP + L-glutamine + ATP + H2O = GMP + L-glutamate + AMP + diphosphate + 2 H(+). The protein operates within purine metabolism; GMP biosynthesis; GMP from XMP (L-Gln route): step 1/1. In terms of biological role, catalyzes the synthesis of GMP from XMP. The sequence is that of GMP synthase [glutamine-hydrolyzing] from Cupriavidus taiwanensis (strain DSM 17343 / BCRC 17206 / CCUG 44338 / CIP 107171 / LMG 19424 / R1) (Ralstonia taiwanensis (strain LMG 19424)).